A 454-amino-acid polypeptide reads, in one-letter code: Probable ECA polymerase (454 aa).

A run of 11 helical transmembrane segments spans residues 3-23 (LGQF…ILTL), 39-59 (FSML…MLVF), 61-81 (FGVA…ATAF), 119-139 (LALV…FLLF), 154-174 (GVAL…VYFL), 180-200 (AWFF…VIVG), 201-221 (GTRA…IVRG), 222-242 (WITL…MFWL), 340-360 (LVVM…GLII), 377-397 (YKAA…IVLA), and 409-429 (VFFC…YWLF).

This sequence belongs to the WzyE family. Probably part of a complex composed of WzxE, WzyE and WzzE.

It localises to the cell inner membrane. It participates in bacterial outer membrane biogenesis; enterobacterial common antigen biosynthesis. Functionally, probably involved in the polymerization of enterobacterial common antigen (ECA) trisaccharide repeat units. This Yersinia pestis bv. Antiqua (strain Angola) protein is Probable ECA polymerase.